We begin with the raw amino-acid sequence, 201 residues long: Transcriptional regulator GfcR (201 aa).

The protein belongs to the purine/pyrimidine phosphoribosyltransferase family. GfcR subfamily.

This chain is Transcriptional regulator GfcR, found in Methanobrevibacter smithii (strain ATCC 35061 / DSM 861 / OCM 144 / PS).